Consider the following 389-residue polypeptide: S-adenosylmethionine synthase (389 aa).

His16 lines the ATP pocket. Asp18 lines the Mg(2+) pocket. Residue Glu44 participates in K(+) binding. L-methionine-binding residues include Glu57 and Gln101. The interval 101–111 (QSVDIAQGVNE) is flexible loop. ATP-binding positions include 168-170 (DAK), 234-235 (RF), Asp243, 249-250 (RK), Ala266, and Lys270. Asp243 contacts L-methionine. Residue Lys274 participates in L-methionine binding.

The protein belongs to the AdoMet synthase family. Homotetramer; dimer of dimers. It depends on Mg(2+) as a cofactor. The cofactor is K(+).

The protein resides in the cytoplasm. The catalysed reaction is L-methionine + ATP + H2O = S-adenosyl-L-methionine + phosphate + diphosphate. Its pathway is amino-acid biosynthesis; S-adenosyl-L-methionine biosynthesis; S-adenosyl-L-methionine from L-methionine: step 1/1. Its function is as follows. Catalyzes the formation of S-adenosylmethionine (AdoMet) from methionine and ATP. The overall synthetic reaction is composed of two sequential steps, AdoMet formation and the subsequent tripolyphosphate hydrolysis which occurs prior to release of AdoMet from the enzyme. The chain is S-adenosylmethionine synthase from Magnetococcus marinus (strain ATCC BAA-1437 / JCM 17883 / MC-1).